The chain runs to 329 residues: MIVSDGPAERRQGALRVGTRGSPLAVAQTQAVSAAVARATGFDIELVTVTTHGDTSRESLSELGGTGVFATALRDALRNGECDLVVHSLKDLPTAPAPGLVLGAVPKRADARDTLCARDGLRFGELPEGASVGTGSPRRAAQLRAQRPGLDIVDIRGNVDTRLSRVSAGDLDAVVLAAAGLGRLGRLDAATDFFSLSTMPTAPGQGALALEVREGDERGRGPIARALAAVDHATTCAATTAERAVLAGLEAGCAAPVGATAMIDDGLLFLTATVYRPDGAAQLTASHAATPDSFGAAHLDEAARDVGERVVAELLASGAADLAPLKGLR.

The residue at position 253 (Cys253) is an S-(dipyrrolylmethanemethyl)cysteine.

Belongs to the HMBS family. Monomer. It depends on dipyrromethane as a cofactor.

It carries out the reaction 4 porphobilinogen + H2O = hydroxymethylbilane + 4 NH4(+). Functionally, tetrapolymerization of the monopyrrole PBG into the hydroxymethylbilane pre-uroporphyrinogen in several discrete steps. This Leifsonia xyli subsp. xyli (strain CTCB07) protein is Porphobilinogen deaminase.